Consider the following 374-residue polypeptide: Succinyl-diaminopimelate desuccinylase (374 aa).

Residue His-66 coordinates Zn(2+). The active site involves Asp-68. Asp-99 provides a ligand contact to Zn(2+). Residue Glu-133 is the Proton acceptor of the active site. Glu-134, Glu-162, and His-348 together coordinate Zn(2+).

This sequence belongs to the peptidase M20A family. DapE subfamily. As to quaternary structure, homodimer. Zn(2+) serves as cofactor. It depends on Co(2+) as a cofactor.

It catalyses the reaction N-succinyl-(2S,6S)-2,6-diaminopimelate + H2O = (2S,6S)-2,6-diaminopimelate + succinate. The protein operates within amino-acid biosynthesis; L-lysine biosynthesis via DAP pathway; LL-2,6-diaminopimelate from (S)-tetrahydrodipicolinate (succinylase route): step 3/3. In terms of biological role, catalyzes the hydrolysis of N-succinyl-L,L-diaminopimelic acid (SDAP), forming succinate and LL-2,6-diaminopimelate (DAP), an intermediate involved in the bacterial biosynthesis of lysine and meso-diaminopimelic acid, an essential component of bacterial cell walls. In Coxiella burnetii (strain CbuK_Q154) (Coxiella burnetii (strain Q154)), this protein is Succinyl-diaminopimelate desuccinylase.